The following is a 233-amino-acid chain: Large ribosomal subunit protein uL1 (233 aa).

The protein belongs to the universal ribosomal protein uL1 family. As to quaternary structure, part of the 50S ribosomal subunit.

Its function is as follows. Binds directly to 23S rRNA. The L1 stalk is quite mobile in the ribosome, and is involved in E site tRNA release. Functionally, protein L1 is also a translational repressor protein, it controls the translation of the L11 operon by binding to its mRNA. The chain is Large ribosomal subunit protein uL1 from Deinococcus deserti (strain DSM 17065 / CIP 109153 / LMG 22923 / VCD115).